The following is a 351-amino-acid chain: Ribonucleoside-diphosphate reductase subunit beta (351 aa).

Positions 94, 124, and 127 each coordinate Fe cation. Y131 is a catalytic residue. 3 residues coordinate Fe cation: E191, E225, and H228.

Belongs to the ribonucleoside diphosphate reductase small chain family. In terms of assembly, tetramer of two alpha and two beta subunits. Requires Fe cation as cofactor.

The enzyme catalyses a 2'-deoxyribonucleoside 5'-diphosphate + [thioredoxin]-disulfide + H2O = a ribonucleoside 5'-diphosphate + [thioredoxin]-dithiol. Its function is as follows. Provides the precursors necessary for DNA synthesis. Catalyzes the biosynthesis of deoxyribonucleotides from the corresponding ribonucleotides. This is Ribonucleoside-diphosphate reductase subunit beta (nrdB) from Treponema pallidum (strain Nichols).